A 121-amino-acid polypeptide reads, in one-letter code: Small ribosomal subunit protein uS13 (121 aa).

Positions arginine 93–lysine 121 are disordered.

Belongs to the universal ribosomal protein uS13 family. Part of the 30S ribosomal subunit. Forms a loose heterodimer with protein S19. Forms two bridges to the 50S subunit in the 70S ribosome.

Its function is as follows. Located at the top of the head of the 30S subunit, it contacts several helices of the 16S rRNA. In the 70S ribosome it contacts the 23S rRNA (bridge B1a) and protein L5 of the 50S subunit (bridge B1b), connecting the 2 subunits; these bridges are implicated in subunit movement. Contacts the tRNAs in the A and P-sites. This chain is Small ribosomal subunit protein uS13, found in Methylibium petroleiphilum (strain ATCC BAA-1232 / LMG 22953 / PM1).